The chain runs to 629 residues: RNA polymerase sigma factor RpoD (629 aa).

A disordered region spans residues 183 to 228 (HNGLDEDFSDEDDEEESSNADVEDNEDEEDNESESTSDSSDSDNSI). Residues 187–228 (DEDFSDEDDEEESSNADVEDNEDEEDNESESTSDSSDSDNSI) show a composition bias toward acidic residues. A sigma-70 factor domain-2 region spans residues 395-465 (MVEANLRLVI…TRSIADQART (71 aa)). The short motif at 419–422 (DLIQ) is the Interaction with polymerase core subunit RpoC element. A sigma-70 factor domain-3 region spans residues 474 to 550 (ETINKLNRIS…DSTLELPLDS (77 aa)). The sigma-70 factor domain-4 stretch occupies residues 563–616 (VLEGLTPREAKVLRMRFGIDMNTDHTLEEVGKQFDVTRERIRQIEAKALRKLRH). Positions 589 to 608 (LEEVGKQFDVTRERIRQIEA) form a DNA-binding region, H-T-H motif.

The protein belongs to the sigma-70 factor family. RpoD/SigA subfamily. Interacts transiently with the RNA polymerase catalytic core.

The protein localises to the cytoplasm. Sigma factors are initiation factors that promote the attachment of RNA polymerase to specific initiation sites and are then released. This sigma factor is the primary sigma factor during exponential growth. This is RNA polymerase sigma factor RpoD from Haemophilus influenzae (strain ATCC 51907 / DSM 11121 / KW20 / Rd).